A 453-amino-acid chain; its full sequence is Homogentisate 1,2-dioxygenase (453 aa).

His-306 functions as the Proton acceptor in the catalytic mechanism. Fe cation is bound by residues His-349 and Glu-355. Homogentisate is bound by residues Tyr-364 and His-385. His-385 provides a ligand contact to Fe cation.

The protein belongs to the homogentisate dioxygenase family. Hexamer; dimer of trimers. Fe cation serves as cofactor.

The catalysed reaction is homogentisate + O2 = 4-maleylacetoacetate + H(+). Its pathway is amino-acid degradation; L-phenylalanine degradation; acetoacetate and fumarate from L-phenylalanine: step 4/6. Functionally, involved in the catabolism of homogentisate (2,5-dihydroxyphenylacetate or 2,5-OH-PhAc), a central intermediate in the degradation of phenylalanine and tyrosine. Catalyzes the oxidative ring cleavage of the aromatic ring of homogentisate to yield maleylacetoacetate. The chain is Homogentisate 1,2-dioxygenase from Rhizobium johnstonii (strain DSM 114642 / LMG 32736 / 3841) (Rhizobium leguminosarum bv. viciae).